A 235-amino-acid polypeptide reads, in one-letter code: Ion-translocating oxidoreductase complex subunit E (235 aa).

5 helical membrane-spanning segments follow: residues 63 to 83, 93 to 113, 117 to 137, 152 to 172, and 206 to 226; these read LGLG…ISLF, IPIY…LMNA, TLYQ…IIIG, IWDG…LGAL, and SFLL…LLAI.

Belongs to the NqrDE/RnfAE family. As to quaternary structure, the complex is composed of six subunits: RnfA, RnfB, RnfC, RnfD, RnfE and RnfG.

The protein resides in the cell inner membrane. Functionally, part of a membrane-bound complex that couples electron transfer with translocation of ions across the membrane. The polypeptide is Ion-translocating oxidoreductase complex subunit E (Haemophilus influenzae (strain ATCC 51907 / DSM 11121 / KW20 / Rd)).